Consider the following 689-residue polypeptide: Armadillo-like helical domain-containing protein 3 (689 aa).

The helical transmembrane segment at 520 to 538 (IFTLTLMVVNLFNMFITYG) threads the bilayer.

Belongs to the ARMH3 family.

It localises to the golgi apparatus membrane. The protein localises to the cytoplasm. May be involved in Golgi maintenance and protein secretion. This chain is Armadillo-like helical domain-containing protein 3, found in Xenopus laevis (African clawed frog).